Reading from the N-terminus, the 727-residue chain is Centrosomal protein kizuna (727 aa).

Residues 1-20 (MTERSGRGGGTRGASALPSP) are disordered. Positions 77 to 124 (KNARIRNQEYLKQFERIQANITASLEKLQELKIEFETQIKKMQLLSKD) form a coiled coil. Disordered stretches follow at residues 176 to 226 (DFTT…NKSD), 271 to 456 (EGKK…FTNL), and 564 to 727 (RLAV…PRTP). Polar residues predominate over residues 198–223 (HQQTAQSSDVTGSRVVQTPGDTQCLN). Basic and acidic residues predominate over residues 286 to 324 (LSPENRTTDLKCDSSRRSEGSEGEILTREHIEVEEERAR). Residue Ser-328 is modified to Phosphoserine. The span at 343-359 (PQEKPPARKASSDHLPC) shows a compositional bias: basic and acidic residues. The span at 380–390 (LSSSSDLTVSV) shows a compositional bias: low complexity. Residue Thr-387 is modified to Phosphothreonine; by PLK1. Residues 442 to 455 (APSTPDSPNESFTN) show a composition bias toward polar residues. Over residues 569 to 583 (SSKSSCSLPSTPSDE) the composition is skewed to low complexity. Over residues 603-613 (QEDESREESTE) the composition is skewed to acidic residues. Positions 631–642 (LKQSALQGSTHQ) are enriched in polar residues. Composition is skewed to low complexity over residues 659-669 (GLKTGSGTFKT) and 677-689 (SEAS…GSPL). Phosphoserine is present on residues Ser-711, Ser-714, and Ser-716.

This sequence belongs to the kizuna family. Interacts with AKAP9, CEP72, ODF2, PCNT and TUBGCP2. In terms of processing, phosphorylation at Thr-387 by PLK1 is not needed for centrosomal localization or pericentriolar material expansion but is indispensable for spindle-pole stabilization.

Its subcellular location is the cytoplasm. The protein localises to the cytoskeleton. The protein resides in the microtubule organizing center. It is found in the centrosome. It localises to the cilium basal body. Functionally, centrosomal protein required for establishing a robust mitotic centrosome architecture that can endure the forces that converge on the centrosomes during spindle formation. Required for stabilizing the expanded pericentriolar material around the centriole. In Bos taurus (Bovine), this protein is Centrosomal protein kizuna (KIZ).